We begin with the raw amino-acid sequence, 317 residues long: Olfactory receptor 2G2 (317 aa).

Residues Met1 to Lys28 are Extracellular-facing. A glycan (N-linked (GlcNAc...) asparagine) is linked at Asn8. A helical membrane pass occupies residues Val29–Ser52. Topologically, residues Arg53–Met60 are cytoplasmic. The helical transmembrane segment at Pro61–Pro82 threads the bilayer. At Gln83–His103 the chain is on the extracellular side. Cysteines 100 and 192 form a disulfide. A helical transmembrane segment spans residues Leu104–Cys123. The Cytoplasmic portion of the chain corresponds to Asp124–His142. The chain crosses the membrane as a helical span at residues Leu143–Val161. The Extracellular portion of the chain corresponds to Gln162–Asn198. A helical membrane pass occupies residues Glu199–Gly222. Residues Tyr223–Lys239 are Cytoplasmic-facing. A helical membrane pass occupies residues Ala240–Tyr262. Topologically, residues Leu263–Lys275 are extracellular. The helical transmembrane segment at Phe276–Leu295 threads the bilayer. Residues Arg296–Leu317 lie on the Cytoplasmic side of the membrane.

The protein belongs to the G-protein coupled receptor 1 family.

It localises to the cell membrane. Functionally, odorant receptor. The chain is Olfactory receptor 2G2 (OR2G2) from Homo sapiens (Human).